The primary structure comprises 252 residues: Probable transcriptional regulatory protein HNE_0161 (252 aa).

Belongs to the TACO1 family.

The protein resides in the cytoplasm. The sequence is that of Probable transcriptional regulatory protein HNE_0161 from Hyphomonas neptunium (strain ATCC 15444).